The sequence spans 123 residues: Large ribosomal subunit protein bL12 (123 aa).

It belongs to the bacterial ribosomal protein bL12 family. As to quaternary structure, homodimer. Part of the ribosomal stalk of the 50S ribosomal subunit. Forms a multimeric L10(L12)X complex, where L10 forms an elongated spine to which 2 to 4 L12 dimers bind in a sequential fashion. Binds GTP-bound translation factors.

Its function is as follows. Forms part of the ribosomal stalk which helps the ribosome interact with GTP-bound translation factors. Is thus essential for accurate translation. The chain is Large ribosomal subunit protein bL12 from Chromobacterium violaceum (strain ATCC 12472 / DSM 30191 / JCM 1249 / CCUG 213 / NBRC 12614 / NCIMB 9131 / NCTC 9757 / MK).